The following is a 214-amino-acid chain: External core antigen (214 aa).

The signal sequence occupies residues 1–19 (MQLFHLCLIISCTCPTFQA). The HBEAG stretch occupies residues 25–27 (GWL). The tract at residues 165–214 (NAPILSTLPETTVVRRRDRGRSPRRRTPSPRRRRSQSPRRRRSQSRESQC) is disordered. Basic residues predominate over residues 178-207 (VRRRDRGRSPRRRTPSPRRRRSQSPRRRRS). A 1; half-length repeat occupies 186–192 (SPRRRTP). Positions 186–208 (SPRRRTPSPRRRRSQSPRRRRSQ) are 3 X 8 AA repeats of S-P-R-R-R-R-S-Q. A propeptide spanning residues 186-214 (SPRRRTPSPRRRRSQSPRRRRSQSRESQC) is cleaved from the precursor. A run of 2 repeats spans residues 193–200 (SPRRRRSQ) and 201–208 (SPRRRRSQ).

This sequence belongs to the orthohepadnavirus precore antigen family. Homodimerizes. Phosphorylated. In terms of processing, cleaved by host furin.

The protein resides in the secreted. It localises to the host nucleus. May regulate immune response to the intracellular capsid in acting as a T-cell tolerogen, by having an immunoregulatory effect which prevents destruction of infected cells by cytotoxic T-cells. This immune regulation may predispose to chronicity during perinatal infections and prevent severe liver injury during adult infections. The chain is External core antigen from Homo sapiens (Human).